Reading from the N-terminus, the 360-residue chain is Vomilenine reductase (360 aa).

Residues G23–I351 form the Enoyl reductase (ER) domain. C50 contributes to the Zn(2+) binding site. S52 lines the an alcohol pocket. S52 is an NADP(+) binding site. Positions 53, 72, 73, 103, 106, 109, 117, and 166 each coordinate Zn(2+). An alcohol is bound at residue H72. Residues L192, G194, L195, S214, T215, S216, K219, K220, V277, A279, S301, and R348 each contribute to the NADP(+) site.

The protein belongs to the zinc-containing alcohol dehydrogenase family. Class-P subfamily. In terms of assembly, homodimer. It depends on Zn(2+) as a cofactor. In terms of tissue distribution, confined to roots.

The protein localises to the cytoplasm. The catalysed reaction is (2R)-1,2-dihydrovomilenine + NADP(+) = vomilenine + NADPH + H(+). It functions in the pathway alkaloid biosynthesis; ajmaline biosynthesis. With respect to regulation, inhibited by EDTA and p-hydroxymercuribenzoate, a sulfhydryl reagent. Its function is as follows. Alcohol dehydrogenase involved in the biosynthesis of ajmaline-type monoterpenoid indole alkaloids (MIAs) natural products, important plant-derived pharmaceuticals used in the therapy of heart disorders. Catalyzes the conversion of vomilenine to 1,2-dihydrovomilenine, an intermediate chemical in the biosynthesis of ajmaline. This chain is Vomilenine reductase, found in Rauvolfia serpentina (Serpentine wood).